The following is a 134-amino-acid chain: MLSPKRTRFRKQHRGRMKGISYRGNRISFGKYALQALEPAWITSRQIEAGRRAMTRNARRGGKIWVRIFPDKPVTLRPAETRMGSGKGSPEYWVAVVKPGRILYEMGGVTENIARRAISLAASKMPIRTQFIIS.

This sequence belongs to the universal ribosomal protein uL16 family. As to quaternary structure, part of the 50S ribosomal subunit.

It localises to the plastid. Its subcellular location is the chloroplast. This chain is Large ribosomal subunit protein uL16c, found in Solanum lycopersicum (Tomato).